We begin with the raw amino-acid sequence, 530 residues long: Arginine--tRNA ligase (530 aa).

Positions 113–123 (ANPTGPLHIGH) match the 'HIGH' region motif.

This sequence belongs to the class-I aminoacyl-tRNA synthetase family. In terms of assembly, monomer.

The protein localises to the cytoplasm. The catalysed reaction is tRNA(Arg) + L-arginine + ATP = L-arginyl-tRNA(Arg) + AMP + diphosphate. The polypeptide is Arginine--tRNA ligase (Campylobacter jejuni subsp. doylei (strain ATCC BAA-1458 / RM4099 / 269.97)).